The primary structure comprises 498 residues: Type II secretion system protein E (498 aa).

Zn(2+) is bound by residues cysteine 394, cysteine 397, cysteine 425, and cysteine 428.

It belongs to the GSP E family. Forms homooligomers; most probably hexamers. Interacts with OutL/GspL. Zn(2+) serves as cofactor.

The protein localises to the cell inner membrane. It carries out the reaction ATP + H2O + cellular proteinSide 1 = ADP + phosphate + cellular proteinSide 2.. Its function is as follows. ATPase component of the type II secretion system required for the energy-dependent secretion of extracellular factors such as proteases and toxins from the periplasm. Acts as a molecular motor to provide the energy that is required for assembly of the pseudopilus and the extrusion of substrates generated in the cytoplasm. The polypeptide is Type II secretion system protein E (outE) (Dickeya dadantii (strain 3937) (Erwinia chrysanthemi (strain 3937))).